The following is a 262-amino-acid chain: tRNA pseudouridine synthase A (262 aa).

The Nucleophile role is filled by Asp-51. Tyr-109 serves as a coordination point for substrate.

This sequence belongs to the tRNA pseudouridine synthase TruA family. Homodimer.

It catalyses the reaction uridine(38/39/40) in tRNA = pseudouridine(38/39/40) in tRNA. In terms of biological role, formation of pseudouridine at positions 38, 39 and 40 in the anticodon stem and loop of transfer RNAs. This chain is tRNA pseudouridine synthase A, found in Glaesserella parasuis serovar 5 (strain SH0165) (Haemophilus parasuis).